Consider the following 224-residue polypeptide: UPF0758 protein Lm4b_01560 (224 aa).

Residues 102-224 (VVRCPEDAVK…YISLKEKGYF (123 aa)) enclose the MPN domain. Zn(2+) is bound by residues His173, His175, and Asp186. The short motif at 173–186 (HNHPSGDPTPSSED) is the JAMM motif element.

It belongs to the UPF0758 family.

The polypeptide is UPF0758 protein Lm4b_01560 (Listeria monocytogenes serotype 4b (strain CLIP80459)).